The chain runs to 321 residues: Sex-lethal homolog (321 aa).

RRM domains lie at 78–156 (TNLI…FARP) and 164–244 (TNLY…VAEE).

Expressed in gonads and somatic tissues of both sexes. In the ovary, expressed in the last egg chamber of each ovariole. Highly expressed in nurse cells with low expression found in oocytes. Highly expressed in testis with lower expression in testis sheath and vas deferentia.

Its subcellular location is the nucleus. In terms of biological role, unknown; apparently not involved in somatic sex determination. The chain is Sex-lethal homolog (SXL) from Megaselia scalaris (Humpbacked fly).